The primary structure comprises 301 residues: Haloalkane dehalogenase (301 aa).

D123 serves as the catalytic Nucleophile. D250 acts as the Proton donor in catalysis. H279 serves as the catalytic Proton acceptor.

It belongs to the haloalkane dehalogenase family. Type 1 subfamily. As to quaternary structure, monomer.

The enzyme catalyses 1-haloalkane + H2O = a halide anion + a primary alcohol + H(+). Catalyzes hydrolytic cleavage of carbon-halogen bonds in halogenated aliphatic compounds, leading to the formation of the corresponding primary alcohols, halide ions and protons. This Phenylobacterium zucineum (strain HLK1) protein is Haloalkane dehalogenase.